A 387-amino-acid polypeptide reads, in one-letter code: MNNFNLHTPTRILFGKGAIAGLREQIPHDARVLITYGGGSVKKTGVLDQVLDALKGMDVLEFGGIEPNPAYETLMNAVKLVREQKVTFLLAVGGGSVLDGTKFIAAAANYPENIDPWHILQTGGKEIKSAIPMGCVLTLPATGSESNAGAVISRKTTGDKQAFHSAHVQPVFAVLDPVYTYTLPPRQVANGVVDAFVHTVEQYVTKPVDAKIQDRFAEGILLTLIEDGPKALKEPENYDVRANVMWAATQALNGLIGAGVPQDWATHMLGHELTAMHGLDHAQTLAIVLPALWNEKRDTKRAKLLQYAERVWNITEGSDDERIDAAIAATRNFFEQLGVPTHLSDYGLDGSSIPALLKKLEEHGMTQLGENHDITLDVSRRIYEAAR.

Residues G38, S40, N68, G95, S96, D99, T138, N147, G149, K160, Y179, and T182 each coordinate NADP(+). Zn(2+) contacts are provided by D194, H198, H267, and H281.

Belongs to the iron-containing alcohol dehydrogenase family. As to quaternary structure, homodimer. The crystals contain two dimers in the asymmetric unit. Zn(2+) is required as a cofactor.

The catalysed reaction is a primary alcohol + NADP(+) = an aldehyde + NADPH + H(+). The enzyme catalyses butan-1-ol + NADP(+) = butanal + NADPH + H(+). It catalyses the reaction 1-propanol + NADP(+) = propanal + NADPH + H(+). It carries out the reaction allyl alcohol + NADP(+) = acrolein + NADPH + H(+). Its function is as follows. Exhibits NADPH-dependent reductase activity for a broad range of short-chain aldehydes. Shows highest catalytic efficiency toward butanal, propanal and the highly toxic aldehydes acrolein and malondialdehyde (MDA), which are produced mainly during lipid peroxidation. Mediates resistance to reactive oxygen species (ROS) elicitors, such as paraquat and potassium tellurite, probably by protecting the cell against the toxic effects of reactive aldehydes derived from membrane lipid peroxidation. Also acts, with lower efficiency, on acetaldehyde, glyceraldehyde, glycolaldehyde, methylglyoxal, glyoxal and hydroxyacetone. Could be involved in glyoxal metabolism, by catalyzing the reduction of glyoxal to glycolaldehyde, and further to 1,2-ethandiol. Catalyzes the reduction of isobutyraldehyde (2-methylpropanal) to isobutanol, and probably contributes to the production of isobutanol. Can probably catalyze the reduction of glutaraldehyde, a widely used biocide, to 1,5-pentanediol, which is non-toxic. Overexpression of YqhD protects the cells against glutaraldehyde toxicity. Can catalyze in vitro the NADPH-dependent reduction of furfural, a natural product of lignocellulosic decomposition, to the less toxic product, furfuryl alcohol. However, it is unlikely that furfural is a physiological substrate. In contrast, Sulzenbacher et al. detected significant activities only in the presence of alcohol and NADP(+). They reported in vitro NADP(+)-dependent alcohol dehydrogenase (ADH) activity towards various alcohols, with a preference for alcohols longer than C(3), but the affinity for the substrates is poor, suggesting that these compounds are not the physiological substrates. Perez et al. did not detect dehydrogenase activity with short and medium chain alcohols such as methanol, ethanol, propanol, butanol or isopropanol. This chain is NADPH-dependent aldehyde reductase YqhD (yqhD), found in Escherichia coli (strain K12).